The primary structure comprises 20 residues: Maximin-Hu (20 aa).

Belongs to the bombinin family. As to expression, expressed by the skin glands.

The protein resides in the secreted. Functionally, has antimicrobial activity. The chain is Maximin-Hu from Bombina maxima (Giant fire-bellied toad).